The sequence spans 67 residues: uncharacterized protein (67 aa).

2 helical membrane passes run 10–30 and 40–60; these read EFFI…IIMW and LMVG…WMVF.

It belongs to the plectrovirus ORF10 family.

The protein localises to the host membrane. This is an uncharacterized protein from Spiroplasma melliferum (SpV1).